Here is a 308-residue protein sequence, read N- to C-terminus: Homoserine O-acetyltransferase (308 aa).

Cys-142 serves as the catalytic Acyl-thioester intermediate. Residues Lys-163 and Ser-192 each coordinate substrate. Residue His-235 is the Proton acceptor of the active site. Glu-237 is a catalytic residue. Arg-249 contributes to the substrate binding site.

Belongs to the MetA family.

It localises to the cytoplasm. It catalyses the reaction L-homoserine + acetyl-CoA = O-acetyl-L-homoserine + CoA. It functions in the pathway amino-acid biosynthesis; L-methionine biosynthesis via de novo pathway; O-acetyl-L-homoserine from L-homoserine: step 1/1. Transfers an acetyl group from acetyl-CoA to L-homoserine, forming acetyl-L-homoserine. The polypeptide is Homoserine O-acetyltransferase (Rhizobium rhizogenes (strain K84 / ATCC BAA-868) (Agrobacterium radiobacter)).